The following is a 455-amino-acid chain: J protein JJJ2 (455 aa).

One can recognise a J domain in the interval 12-76; the sequence is TYYSILGVPT…QLRAEYDKKL (65 aa). The interval 104–241 is disordered; it reads RNSKPYEQQP…RKKSEKKATP (138 aa). The span at 133–144 shows a compositional bias: low complexity; sequence NSNPHNENSSNN. Residues 156 to 168 show a composition bias toward basic and acidic residues; it reads TLSKDSEDKHGTD.

The protein localises to the cytoplasm. It is found in the nucleus. This is J protein JJJ2 (JJJ2) from Candida glabrata (strain ATCC 2001 / BCRC 20586 / JCM 3761 / NBRC 0622 / NRRL Y-65 / CBS 138) (Yeast).